Here is a 337-residue protein sequence, read N- to C-terminus: MTEINEKSLLKQALAEIKKKFGNESIMVLGEKPPIDTEVFSSGSMAIDMALGIGGFPKGRIVEIYGPESSGKTTISLHAIAEVQKQGGIAAFIDAEHSIDPQYAKNLGIDIDNLILSQPDSGEQALDIVDTLTKTKAIDLIVVDSVAALVPMAELQGEMKDQVIGAQARLMSKALRKITASLNKNGTTVIFINQIREKVGVIFGNPETTPGGRGLKFYASIRLDVRKIQQITSGNDITGHSVKIKVVKNKLAIPFKTALVEIVFAKGISKSAEIAQLGEELGILVRKGSWFAYKGENIAQGKVNLKLLLENNTKLFNEIKDQIIEKLKENQQQSQTL.

66-73 (GPESSGKT) provides a ligand contact to ATP.

Belongs to the RecA family.

It is found in the cytoplasm. Functionally, can catalyze the hydrolysis of ATP in the presence of single-stranded DNA, the ATP-dependent uptake of single-stranded DNA by duplex DNA, and the ATP-dependent hybridization of homologous single-stranded DNAs. It interacts with LexA causing its activation and leading to its autocatalytic cleavage. The chain is Protein RecA from Mesomycoplasma hyopneumoniae (strain J / ATCC 25934 / NCTC 10110) (Mycoplasma hyopneumoniae).